We begin with the raw amino-acid sequence, 432 residues long: Keratin, type I cytoskeletal 17 (432 aa).

The tract at residues 1-24 (MTTTIRQFTSSSSIKGSSGLGGGS) is disordered. The tract at residues 1 to 83 (MTTTIRQFTS…GGVDGLLAGG (83 aa)) is head. 2 positions are modified to phosphoserine: Ser-12 and Ser-13. Lys-15 participates in a covalent cross-link: Glycyl lysine isopeptide (Lys-Gly) (interchain with G-Cter in SUMO1); alternate. A Glycyl lysine isopeptide (Lys-Gly) (interchain with G-Cter in SUMO2); alternate cross-link involves residue Lys-15. A phosphoserine mark is found at Ser-25, Ser-32, and Ser-39. Phosphoserine; by RPS6KA1 is present on Ser-44. The coil 1A stretch occupies residues 84-120 (EKATMQNLNDRLASYLDKVRALEEANTELEVKIRDWY). The region spanning 84 to 395 (EKATMQNLND…RLLEGEDAHL (312 aa)) is the IF rod domain. Phosphothreonine is present on Thr-110. A linker 1 region spans residues 121–138 (QRQAPGPARDYSQYYRTI). Residues 139–230 (EELQNKILTA…NHEEEMNALR (92 aa)) form a coil 1B region. The interval 231–250 (GQVGGEINVEMDAAPGVDLS) is linker 12. Residues 251–392 (RILNEMRDQY…TYRRLLEGED (142 aa)) are coil 2. Lys-278 participates in a covalent cross-link: Glycyl lysine isopeptide (Lys-Gly) (interchain with G-Cter in SUMO2). Thr-279 is modified (phosphothreonine). A Phosphoserine modification is found at Ser-323. The segment at 393 to 432 (AHLTQYKKEPVTTRQVRTIVEEVQDGKVISSREQVHQTTR) is tail. Residues Lys-399, Lys-400, and Lys-419 each participate in a glycyl lysine isopeptide (Lys-Gly) (interchain with G-Cter in SUMO1); alternate cross-link. Residues Lys-399, Lys-400, and Lys-419 each participate in a glycyl lysine isopeptide (Lys-Gly) (interchain with G-Cter in SUMO2); alternate cross-link.

It belongs to the intermediate filament family. Heterodimer of a type I and a type II keratin. KRT17 associates with KRT6 isomers (KRT6A or KRT6B). Interacts with TRADD and SFN. Post-translationally, phosphorylation at Ser-44 occurs in a growth- and stress-dependent fashion in skin keratinocytes, it has no effect on filament organization.

Its subcellular location is the cytoplasm. Functionally, type I keratin involved in the formation and maintenance of various skin appendages, specifically in determining shape and orientation of hair. Required for the correct growth of hair follicles, in particular for the persistence of the anagen (growth) state. Modulates the function of TNF-alpha in the specific context of hair cycling. Regulates protein synthesis and epithelial cell growth through binding to the adapter protein SFN and by stimulating Akt/mTOR pathway. Involved in tissue repair. May be a marker of basal cell differentiation in complex epithelia and therefore indicative of a certain type of epithelial 'stem cells'. Acts as a promoter of epithelial proliferation by acting a regulator of immune response in skin: promotes Th1/Th17-dominated immune environment contributing to the development of basaloid skin tumors. May act as an autoantigen in the immunopathogenesis of psoriasis, with certain peptide regions being a major target for autoreactive T-cells and hence causing their proliferation. The protein is Keratin, type I cytoskeletal 17 of Pan troglodytes (Chimpanzee).